The sequence spans 279 residues: uncharacterized protein (279 aa).

Residues Met-1–Gly-28 are disordered. Over residues Ser-9–Asn-23 the composition is skewed to low complexity. Residues Lys-256 to Ala-273 traverse the membrane as a helical segment.

It localises to the host membrane. This is an uncharacterized protein from Pseudoalteromonas espejiana (Bacteriophage PM2).